The sequence spans 761 residues: Cyclin-D-binding Myb-like transcription factor 1 (761 aa).

An interaction with CCND2 region spans residues 1–237 (MSTVEEDSDT…TPEEIEKLKE (237 aa)). Residues 24–51 (DTDGNLILHCPQNDPDEVDSEDSTEPPH) form a disordered region. Over residues 37-47 (DPDEVDSEDST) the composition is skewed to acidic residues. Residues 87-170 (VTMTATTEVA…IDILMNNIER (84 aa)) are required for transcriptional activation. Positions 87 to 458 (VTMTATTEVA…DNTAISPSPM (372 aa)) are required for DNA-binding. The interaction with CCND1, CCND2 and CCND3 stretch occupies residues 176-761 (GIKDATEIIF…KDVEDLVNCH (586 aa)). Residues 225–263 (GKYTPEEIEKLKELRIKHGNDWATIGAALGRSASSVKDR) enclose the Myb-like 1 domain. The region spanning 268–333 (KDTCNTGKWT…KWLNYLNWKQ (66 aa)) is the HTH myb-type domain. The segment at residues 306–329 (WAAVAERVGTRSEKQCRSKWLNYL) is a DNA-binding region (H-T-H motif). The Myb-like 2 domain maps to 339-388 (WTKEDEINLILRIAELDVADENDINWDLLAEGWSSVRSPQWLRSKWWTIK). Residues 459–761 (AALQIPVQIT…KDVEDLVNCH (303 aa)) are required for transcriptional activation. Disordered regions lie at residues 584–625 (SLSQ…MTIQ) and 740–761 (GSSL…VNCH).

The protein belongs to the DMTF1 family. As to quaternary structure, interacts with the D-type cyclins CCND1, CCND2 and CCND3. Interaction with D-type cyclins may modulate transcriptional activation by this protein. Phosphorylated by the cyclin-D2/CDK4, cyclin-D3/CDK4 and cyclin-D2/CDK6 complexes and to a lesser extent by the cyclin-D1/CDK4 complex. Ubiquitously expressed (at mRNA level). Expressed in brain, intestine, kidney, lung, pancreas, skin, spleen and tongue (at protein level). Expressed at high levels in testis and thymus (at protein level). In all tissues examined, expression is predominant in non-proliferating and differentiated cell types. These include epithelial, interstitial and smooth muscle cells of the intestine, differentiated spermatids, sperm and interstitial cells of the testis, and lymphoid cells of the medullary compartment of the thymus.

The protein resides in the nucleus. Its function is as follows. Transcriptional activator which activates the CDKN2A/ARF locus in response to Ras-Raf signaling, thereby promoting p53/TP53-dependent growth arrest. May also cooperate with MYB to activate transcription of the ANPEP gene. Binds to the consensus sequence 5'-CCCG[GT]ATGT-3'. In Mus musculus (Mouse), this protein is Cyclin-D-binding Myb-like transcription factor 1 (Dmtf1).